The primary structure comprises 125 residues: Phosphoribosyl-AMP cyclohydrolase (125 aa).

Aspartate 74 contributes to the Mg(2+) binding site. Cysteine 75 contributes to the Zn(2+) binding site. Mg(2+) is bound by residues aspartate 76 and aspartate 78. Positions 92 and 99 each coordinate Zn(2+).

It belongs to the PRA-CH family. In terms of assembly, homodimer. It depends on Mg(2+) as a cofactor. Zn(2+) is required as a cofactor.

The protein resides in the cytoplasm. It catalyses the reaction 1-(5-phospho-beta-D-ribosyl)-5'-AMP + H2O = 1-(5-phospho-beta-D-ribosyl)-5-[(5-phospho-beta-D-ribosylamino)methylideneamino]imidazole-4-carboxamide. Its pathway is amino-acid biosynthesis; L-histidine biosynthesis; L-histidine from 5-phospho-alpha-D-ribose 1-diphosphate: step 3/9. Catalyzes the hydrolysis of the adenine ring of phosphoribosyl-AMP. The sequence is that of Phosphoribosyl-AMP cyclohydrolase from Geobacter metallireducens (strain ATCC 53774 / DSM 7210 / GS-15).